Consider the following 601-residue polypeptide: MGDEMLKERLKKVPLQPGVYLFKNQEGQVLYVGKARVLRQRMRSYFQAPERMHPKVKAMMAWVSDFDFIVTHSEMEALILENNLIKSYKPRYNIDLRDDKSYPYIKVTVADKFPRVYLAREKKDGVSRYFGPYTDVTSLRDTLKLLNGVFGLRSCRTMKSRRRPCLNRDMGKCLSPCSGEISEEEYSQKVQALITFLEGDFQEIVREKEKEMAMAARSLEFEKAARLRDQIQSLRQLGEKQKIELASPYELDLVGMLSGEKENLVLVFKVRSGKIVGKDTFWLKRPIQEDENEAMEFFIKHYYDENPDIPPEILLSHLPSESKLVEAWLKSRVSHRVELRVPQRGEKKQVLNMLLENARLLLEEKQREENKQLAALSHLARVLDLEVVPNRLECFDVSHLAGEETVASMVVFVGGQPEKKAYRHFKIRTQQNNDTASLAETVRRRLENARQANPAFLPEPDLILVDGGLGQVNAVAAVLQEMNLDIPLFALAEKNEEIYRPGKSQPLVLAARDNGLQLLQRLRDEAHRFAIEYNRKRRAKKIRSSALDEIPGIGKQRKKNLLVHFTSVAKIKEASLDEIAAVPGMNRKAALAVIEFFHNQD.

Residues 15 to 94 form the GIY-YIG domain; it reads LQPGVYLFKN…IKSYKPRYNI (80 aa). In terms of domain architecture, UVR spans 202-237; sequence QEIVREKEKEMAMAARSLEFEKAARLRDQIQSLRQL.

This sequence belongs to the UvrC family. As to quaternary structure, interacts with UvrB in an incision complex.

It is found in the cytoplasm. In terms of biological role, the UvrABC repair system catalyzes the recognition and processing of DNA lesions. UvrC both incises the 5' and 3' sides of the lesion. The N-terminal half is responsible for the 3' incision and the C-terminal half is responsible for the 5' incision. This chain is UvrABC system protein C, found in Syntrophomonas wolfei subsp. wolfei (strain DSM 2245B / Goettingen).